Reading from the N-terminus, the 207-residue chain is Uridine kinase (207 aa).

11-18 is an ATP binding site; sequence GGSGSGKT.

Belongs to the uridine kinase family.

It localises to the cytoplasm. The catalysed reaction is uridine + ATP = UMP + ADP + H(+). The enzyme catalyses cytidine + ATP = CMP + ADP + H(+). It participates in pyrimidine metabolism; CTP biosynthesis via salvage pathway; CTP from cytidine: step 1/3. The protein operates within pyrimidine metabolism; UMP biosynthesis via salvage pathway; UMP from uridine: step 1/1. The polypeptide is Uridine kinase (Staphylococcus haemolyticus (strain JCSC1435)).